We begin with the raw amino-acid sequence, 631 residues long: 30-kDa cleavage and polyadenylation specificity factor 30 (631 aa).

The tract at residues 12–38 (EGGLDSGPVQNTASVPVAPPENSSSAA) is disordered. C3H1-type zinc fingers lie at residues 60-87 (SFRQ…HQFD), 88-112 (KARM…VYKH), and 114-141 (NEDI…HAKL). The interval 179 to 234 (QDRPQGQVPMQGQPQESGNLQQQQQQQPQQSQHQVSQTLIPNPADQTNRTSHPLPQ) is disordered. Over residues 182-215 (PQGQVPMQGQPQESGNLQQQQQQQPQQSQHQVSQ) the composition is skewed to low complexity. Residues 216 to 231 (TLIPNPADQTNRTSHP) show a composition bias toward polar residues. Positions 237-372 (NRYFVVKSNN…SVGEQLASLL (136 aa)) constitute a YTH domain. Basic and acidic residues predominate over residues 392-407 (EEEKAKGVNPESRAEN). Disordered stretches follow at residues 392–447 (EEEK…RGIM) and 541–631 (PHMG…KKRR). The segment covering 412–432 (PFEDNEEEEEEEDESEEEEES) has biased composition (acidic residues). Residues 573–583 (KTPERSDERGV) are compositionally biased toward basic and acidic residues. Phosphoserine is present on residues S610 and S612. Residues 621 to 631 (RSRHGEGKKRR) are compositionally biased toward basic residues.

It belongs to the CPSF4/YTH1 family. Component of the cleavage and polyadenylation specificity factor (CPSF) complex. Can form homodimers. Binds to calmodulin. Forms a complex with cleavage and polyadenylation specificity factor (CPSF) subunits CPSF73-I, CPSF73-II, CPSF100, CPSF160, CFIS2, FIPS3, FIPS5, PAPS2, PAPS3, CLPS3, PCFS1, PCFS4, CSTF50 and CSTF77. Expressed in seedlings, roots, leaves, siliques, stems and flowers.

It localises to the nucleus. It is found in the cytoplasm. Its activity is regulated as follows. Endonuclease activity is repressed by the N-terminal domain of FIPS5. Nuclease activity is inhibited by zinc (&gt;100 uM), cadmium in a progressive manner (50 percent activity at 1 mM Cd(2+)), and high salt levels (e.g. KCl or NaCl &gt;600 mM). Stimulated by ATP in the presence of Zn(2+), even at inhibitory zinc concentrations. Elevated temperatures prevent RNA-binding at 55 degrees Celsius, but endonuclease activity at 70 degrees Celsius. The sulfhydryl reagent dithiothreitol (DTT) inhibits both RNA-binding and nuclease activities. Functionally, component of the cleavage and polyadenylation specificity factor (CPSF) complex that play a key role in pre-mRNA 3'-end formation. May interact with poly(A) polymerase and other factors to bring about cleavage and poly(A) addition. Mediates poly(A) site selection. Binds RNA in a calcium-dependent manner. Exhibits endonuclease activity with an ability to nick and degrade linear as well as circular single-stranded RNA that leaves RNA 3' ends with hydroxyl groups, thus mediating processing of the pre-mRNA as a prelude to the polyadenylation. Involved in the post-transcriptional control, probably via poly(A) addition, of the responses of plants to stress, especially genes mediating tolerance to oxidative stress. Plays a role in the regulation of salicylic acid (SA) production via the control of messenger RNA 3' end processing, thus being a key component of programmed cell death and plant immune responses required for resistance to virulent Pseudomonas syringae pv tomato DC3000 (Pst). This Arabidopsis thaliana (Mouse-ear cress) protein is 30-kDa cleavage and polyadenylation specificity factor 30.